The chain runs to 514 residues: Nuclear hormone receptor family member nhr-85 (514 aa).

The disordered stretch occupies residues 28–48; that stretch reads TSFSSPPATSSSSLLSPSPSS. Positions 110–186 form a DNA-binding region, nuclear receptor; that stretch reads TILCQVCSDK…VGMSRDAVRF (77 aa). NR C4-type zinc fingers lie at residues 113 to 133 and 150 to 174; these read CQVC…CEGC and CTRA…LKKC. The NR LBD domain maps to 216-514; sequence QYENLTEVMH…VSPVPTTLSE (299 aa). The disordered stretch occupies residues 465 to 514; sequence ERPRRISSSGAQEPLNLSLPHVRHQVKRDVDSDEQLEEMKVSPVPTTLSE.

Belongs to the nuclear hormone receptor family.

The protein localises to the nucleus. Functionally, orphan nuclear receptor. The sequence is that of Nuclear hormone receptor family member nhr-85 (nhr-85) from Caenorhabditis elegans.